The primary structure comprises 406 residues: Peptide transporter imqD (406 aa).

Residues 1 to 25 (MTAPADSTEKSETSETTTLQTTEVS) are disordered. Low complexity predominate over residues 14-25 (SETTTLQTTEVS). 6 consecutive transmembrane segments (helical) span residues 184–204 (GLVACRVILGFILFFTCLSQA), 220–240 (IPNDTITAMNPIFCVIMGPVI), 262–282 (ATGFIMMSASMAFAAGVQKII), 309–329 (VFLQTPTYIILAVAEIFSFVT), 344–364 (AVVQALGQLGAAAGSAIGIAI), and 373–393 (LIWMYTGLAVAMFLVAVVFWI).

This sequence belongs to the major facilitator superfamily. Proton-dependent oligopeptide transporter (POT/PTR) (TC 2.A.17) family.

It is found in the membrane. In terms of biological role, peptide transporter; part of the gene cluster that mediates the biosynthesis of imizoquins A to D, tripeptide-derived alkaloids that serve a protective role against oxidative stress that are essential for normal germination. The chain is Peptide transporter imqD from Aspergillus flavus (strain ATCC 200026 / FGSC A1120 / IAM 13836 / NRRL 3357 / JCM 12722 / SRRC 167).